The following is a 564-amino-acid chain: Transmembrane anterior posterior transformation protein 1 (564 aa).

The segment covering 1–10 (MAGVCDAAAP) has biased composition (low complexity). A disordered region spans residues 1-55 (MAGVCDAAAPGEGGGGGADGPERTGRGEAEQPGGGGHGPAPQHTETLGFYESDRR). Ala-2 is modified (N-acetylalanine). The span at 20–29 (GPERTGRGEA) shows a compositional bias: basic and acidic residues. Helical transmembrane passes span 108–128 (LMFF…TLLP), 154–176 (PAQV…MHYV), 233–253 (IGVI…AILI), 332–352 (LWVL…VDIV), 400–420 (GFIP…SIKV), and 429–449 (VILF…VLLG). The interval 464 to 546 (LFNPPPASTP…ENSELKHRSS (83 aa)) is disordered. The segment covering 473-489 (PGKPSSKSQSKGKPSQG) has biased composition (low complexity). 2 stretches are compositionally biased toward polar residues: residues 490 to 505 (LSTE…SQPG) and 516 to 525 (VTSNSDQFLT). Ser-520 bears the Phosphoserine mark. Thr-526 is modified (phosphothreonine). Residues 532–546 (KDITQENSELKHRSS) show a composition bias toward basic and acidic residues.

The protein belongs to the TAPT1 family. As to expression, ubiquitous. Expressed throughout embryo.

It is found in the cytoplasm. It localises to the cytoskeleton. The protein localises to the microtubule organizing center. The protein resides in the centrosome. Its subcellular location is the cilium basal body. It is found in the membrane. In terms of biological role, plays a role in primary cilia formation. May act as a downstream effector of HOXC8 possibly by transducing or transmitting extracellular information required for axial skeletal patterning during development. May be involved in cartilage and bone development. May play a role in the differentiation of cranial neural crest cells. The protein is Transmembrane anterior posterior transformation protein 1 (Tapt1) of Mus musculus (Mouse).